The chain runs to 158 residues: Phosphopantetheine adenylyltransferase (158 aa).

T9 contributes to the substrate binding site. ATP-binding positions include 9–10 (TF) and H17. 3 residues coordinate substrate: K41, L73, and R87. ATP is bound by residues 88-90 (GVR), E98, and 123-129 (WSYVSST).

The protein belongs to the bacterial CoaD family. In terms of assembly, homohexamer. The cofactor is Mg(2+).

It localises to the cytoplasm. The catalysed reaction is (R)-4'-phosphopantetheine + ATP + H(+) = 3'-dephospho-CoA + diphosphate. It functions in the pathway cofactor biosynthesis; coenzyme A biosynthesis; CoA from (R)-pantothenate: step 4/5. Reversibly transfers an adenylyl group from ATP to 4'-phosphopantetheine, yielding dephospho-CoA (dPCoA) and pyrophosphate. This is Phosphopantetheine adenylyltransferase from Pasteurella multocida (strain Pm70).